The following is a 381-amino-acid chain: MNKPLRIGLIAGEASGDILGEGLIKALKIHYPDAVFEGIAGPKMIAQGCTALHPLEALSVMGFVEVLGKLGSILRIRKSIINHFIANPPDIFIGIDAPDFNLTVELKLKQHNIKTIHYVSPSVWAWKQWRIHKIAKATDLVLAFLPFEKAFYDRFDVPCRFIGHTLADQLPLEPEKQQARQSLGLQADAKLLAILPGSRKAEVEILGPIFLQSAALISRQYPDYKFIVPMVNGARKKQLLEQQQQYAPDLPLQIFDGQASAVLQSADAVLLASGTAALEAMLAKVPMVVAYKVNLLTYVIAKALVKVKYTSLPNLIADKEIVKELSQYNCTVENIVAALQPLLGQDNHQMINTFIRLHKLIRCDADRQAAQAVVDVLNNKK.

This sequence belongs to the LpxB family.

It catalyses the reaction a lipid X + a UDP-2-N,3-O-bis[(3R)-3-hydroxyacyl]-alpha-D-glucosamine = a lipid A disaccharide + UDP + H(+). The protein operates within bacterial outer membrane biogenesis; LPS lipid A biosynthesis. Its function is as follows. Condensation of UDP-2,3-diacylglucosamine and 2,3-diacylglucosamine-1-phosphate to form lipid A disaccharide, a precursor of lipid A, a phosphorylated glycolipid that anchors the lipopolysaccharide to the outer membrane of the cell. The sequence is that of Lipid-A-disaccharide synthase from Psychromonas ingrahamii (strain DSM 17664 / CCUG 51855 / 37).